We begin with the raw amino-acid sequence, 42 residues long: Photosystem II reaction center protein J (42 aa).

Residues 10–30 (IPLWLIGTVVGSLAIGLLAIF) form a helical membrane-spanning segment.

Belongs to the PsbJ family. PSII is composed of 1 copy each of membrane proteins PsbA, PsbB, PsbC, PsbD, PsbE, PsbF, PsbH, PsbI, PsbJ, PsbK, PsbL, PsbM, PsbT, PsbX, PsbY, PsbZ, Psb30/Ycf12, at least 3 peripheral proteins of the oxygen-evolving complex and a large number of cofactors. It forms dimeric complexes.

It is found in the plastid. The protein localises to the chloroplast thylakoid membrane. In terms of biological role, one of the components of the core complex of photosystem II (PSII). PSII is a light-driven water:plastoquinone oxidoreductase that uses light energy to abstract electrons from H(2)O, generating O(2) and a proton gradient subsequently used for ATP formation. It consists of a core antenna complex that captures photons, and an electron transfer chain that converts photonic excitation into a charge separation. This chain is Photosystem II reaction center protein J, found in Stigeoclonium helveticum (Green alga).